Consider the following 306-residue polypeptide: LysM and putative peptidoglycan-binding domain-containing protein 3 (306 aa).

The Extracellular segment spans residues 1-217 (MAGRHQNRSF…PYYGADWGIG (217 aa)). N-linked (GlcNAc...) asparagine glycosylation occurs at N7. S55 is subject to Phosphoserine. Residues 65 to 109 (LTKDIQEGDTLNAIALQYCCTVADIKRVNNLISDQDFFALRSIKI) form the LysM domain. Residues 218–238 (WWTAVVIMLIVGIITPVFYLL) form a helical membrane-spanning segment. Over 239 to 306 (YYEILAKVDV…SQSPAAQQET (68 aa)) the chain is Cytoplasmic.

It is found in the cell membrane. It localises to the golgi apparatus. Essential for Golgi structural integrity. The sequence is that of LysM and putative peptidoglycan-binding domain-containing protein 3 (LYSMD3) from Homo sapiens (Human).